We begin with the raw amino-acid sequence, 418 residues long: MFSHCEGYRIEGGVTDGETNWNNNFNQNNNNNDNNKVMASIYKQQFYGKPHKTFMSLSSPNGPILVCIKKVGNSSDDFYLLVCTEKGFEEVRANKDSLQKSKTTRSFLKMRPTSLNVITSVRPELTKVPLCKVTDKSIQEELVKVCEPEFNKVIKSALLYCKESQRDDNDMLKNISSNVSQEYNDFLNFLGEKVELKDFSKFNGGLDIKNNSHGTHSIYSQINDVEVMYHVATMLPFFPSDPKQSERRKLISLDRVVIIFNDGSKPMSPNCIKSKSTQIIILIQPIKNFVGNSKTTIGISNDENRVVGEQPSPSLTTTTTTTTTTSPTINSNSPTPSNKIKYRVSISNRDEVPNYGPPLPDPPIFEKDDSFRNFLYQKMVGGAASLRNTPAFTSKNSEKASALINVISKYSTKGMEQI.

The Rap-GAP domain occupies 142 to 407; sequence LVKVCEPEFN…EKASALINVI (266 aa). Residues 304–339 are disordered; the sequence is NRVVGEQPSPSLTTTTTTTTTTSPTINSNSPTPSNK. Positions 311 to 338 are enriched in low complexity; the sequence is PSPSLTTTTTTTTTTSPTINSNSPTPSN.

In terms of biological role, mediates the deactivation of rap1 during multicellular development and is required for normal morphogenesis. Also required for the correct patterning of specific subtypes of prestalk cells. This is RapA guanosine triphosphatase-activating protein B (rapgapB) from Dictyostelium discoideum (Social amoeba).